The sequence spans 264 residues: Thymidylate synthase (264 aa).

Residue Arg-21 coordinates dUMP. His-51 contacts (6R)-5,10-methylene-5,6,7,8-tetrahydrofolate. 126 to 127 lines the dUMP pocket; it reads RR. Cys-146 functions as the Nucleophile in the catalytic mechanism. DUMP contacts are provided by residues 166-169, Asn-177, and 207-209; these read RSCD and HLY. Asp-169 is a (6R)-5,10-methylene-5,6,7,8-tetrahydrofolate binding site. Ser-263 serves as a coordination point for (6R)-5,10-methylene-5,6,7,8-tetrahydrofolate.

Belongs to the thymidylate synthase family. Bacterial-type ThyA subfamily. Homodimer.

The protein resides in the cytoplasm. It catalyses the reaction dUMP + (6R)-5,10-methylene-5,6,7,8-tetrahydrofolate = 7,8-dihydrofolate + dTMP. It participates in pyrimidine metabolism; dTTP biosynthesis. Its function is as follows. Catalyzes the reductive methylation of 2'-deoxyuridine-5'-monophosphate (dUMP) to 2'-deoxythymidine-5'-monophosphate (dTMP) while utilizing 5,10-methylenetetrahydrofolate (mTHF) as the methyl donor and reductant in the reaction, yielding dihydrofolate (DHF) as a by-product. This enzymatic reaction provides an intracellular de novo source of dTMP, an essential precursor for DNA biosynthesis. In Buchnera aphidicola subsp. Acyrthosiphon pisum (strain 5A), this protein is Thymidylate synthase.